A 392-amino-acid chain; its full sequence is uncharacterized protein (392 aa).

It belongs to the glycosyltransferase group 1 family. Glycosyltransferase 4 subfamily.

This is an uncharacterized protein from Methanocaldococcus jannaschii (strain ATCC 43067 / DSM 2661 / JAL-1 / JCM 10045 / NBRC 100440) (Methanococcus jannaschii).